A 1231-amino-acid polypeptide reads, in one-letter code: ATP-dependent RNA helicase DHX30 (1231 aa).

Residues 39–65 (PDGLEGARQEDEEEQPPPPGAEEQSTA) form a disordered region. 2 consecutive DRBM domains span residues 80-148 (PKNL…CQLF) and 292-359 (PKNL…CQKL). One can recognise a Helicase ATP-binding domain in the interval 488-656 (LSAIEQNPVV…FGGCPVVKVP (169 aa)). Residue 501–508 (GDTGCGKT) coordinates ATP. The short motif at 603–606 (DEVH) is the DEAH box element. One can recognise a Helicase C-terminal domain in the interval 697–870 (LITDLVLQID…NLVVQAKIHM (174 aa)).

It belongs to the DEAD box helicase family. DEAH subfamily.

The protein resides in the cytoplasm. Its subcellular location is the mitochondrion. It localises to the mitochondrion matrix. It is found in the mitochondrion nucleoid. It catalyses the reaction ATP + H2O = ADP + phosphate + H(+). In terms of biological role, RNA-dependent helicase. Plays an important role in the assembly of the mitochondrial large ribosomal subunit. Required for optimal function of the zinc-finger antiviral protein ZC3HAV1. Associates with mitochondrial DNA. Involved in nervous system development and differentiation through its involvement in the up-regulation of a number of genes which are required for neurogenesis, including GSC, NCAM1, neurogenin, and NEUROD. This Gallus gallus (Chicken) protein is ATP-dependent RNA helicase DHX30 (DHX30).